We begin with the raw amino-acid sequence, 288 residues long: Protease HtpX homolog (288 aa).

2 helical membrane passes run 7 to 27 (TAVLMAAITALFIVVGGMLGG) and 29 to 49 (QGMLMALLMAVGMNFFSYWFS). Histidine 131 provides a ligand contact to Zn(2+). Glutamate 132 is an active-site residue. Zn(2+) is bound at residue histidine 135. 2 helical membrane-spanning segments follow: residues 141-161 (ILISAVAATMAGAISALANFA) and 177-197 (IASLMVAILAPIAASLIQMSI). Glutamate 202 is a Zn(2+) binding site.

Belongs to the peptidase M48B family. It depends on Zn(2+) as a cofactor.

It is found in the cell inner membrane. This Polynucleobacter necessarius subsp. necessarius (strain STIR1) protein is Protease HtpX homolog.